A 120-amino-acid polypeptide reads, in one-letter code: NAD(P)H-quinone oxidoreductase subunit 3 (120 aa).

A run of 3 helical transmembrane segments spans residues 1-21 (MFVLSGYEYLLGFFIICSLVP), 64-84 (MFALVFVVFDVETVFLYPWAV), and 89-109 (LGLLAFIEALVFIAILVVALV).

The protein belongs to the complex I subunit 3 family. In terms of assembly, NDH-1 can be composed of about 15 different subunits; different subcomplexes with different compositions have been identified which probably have different functions.

The protein resides in the cellular thylakoid membrane. It carries out the reaction a plastoquinone + NADH + (n+1) H(+)(in) = a plastoquinol + NAD(+) + n H(+)(out). The catalysed reaction is a plastoquinone + NADPH + (n+1) H(+)(in) = a plastoquinol + NADP(+) + n H(+)(out). In terms of biological role, NDH-1 shuttles electrons from an unknown electron donor, via FMN and iron-sulfur (Fe-S) centers, to quinones in the respiratory and/or the photosynthetic chain. The immediate electron acceptor for the enzyme in this species is believed to be plastoquinone. Couples the redox reaction to proton translocation, and thus conserves the redox energy in a proton gradient. Cyanobacterial NDH-1 also plays a role in inorganic carbon-concentration. In Nostoc punctiforme (strain ATCC 29133 / PCC 73102), this protein is NAD(P)H-quinone oxidoreductase subunit 3.